A 298-amino-acid chain; its full sequence is Nucleotide-binding protein GTNG_3015 (298 aa).

17 to 24 (GMSGAGKT) lines the ATP pocket. 68-71 (DLRS) provides a ligand contact to GTP.

Belongs to the RapZ-like family.

Displays ATPase and GTPase activities. This is Nucleotide-binding protein GTNG_3015 from Geobacillus thermodenitrificans (strain NG80-2).